Reading from the N-terminus, the 171-residue chain is Methylated-DNA--protein-cysteine methyltransferase (171 aa).

Cys-139 acts as the Nucleophile; methyl group acceptor in catalysis.

It belongs to the MGMT family.

The protein localises to the cytoplasm. The catalysed reaction is a 6-O-methyl-2'-deoxyguanosine in DNA + L-cysteinyl-[protein] = S-methyl-L-cysteinyl-[protein] + a 2'-deoxyguanosine in DNA. It catalyses the reaction a 4-O-methyl-thymidine in DNA + L-cysteinyl-[protein] = a thymidine in DNA + S-methyl-L-cysteinyl-[protein]. Its function is as follows. Involved in the cellular defense against the biological effects of O6-methylguanine (O6-MeG) and O4-methylthymine (O4-MeT) in DNA. Repairs the methylated nucleobase in DNA by stoichiometrically transferring the methyl group to a cysteine residue in the enzyme. This is a suicide reaction: the enzyme is irreversibly inactivated. The chain is Methylated-DNA--protein-cysteine methyltransferase from Shigella flexneri.